We begin with the raw amino-acid sequence, 412 residues long: LL-diaminopimelate aminotransferase (412 aa).

Residues Y15 and G42 each coordinate substrate. Pyridoxal 5'-phosphate-binding positions include Y72, 108-109 (SK), Y132, N187, Y218, and 246-248 (SFS). Residues K109, Y132, and N187 each contribute to the substrate site. N6-(pyridoxal phosphate)lysine is present on K249. 2 residues coordinate pyridoxal 5'-phosphate: R257 and N292. Positions 292 and 388 each coordinate substrate.

It belongs to the class-I pyridoxal-phosphate-dependent aminotransferase family. LL-diaminopimelate aminotransferase subfamily. As to quaternary structure, homodimer. Pyridoxal 5'-phosphate is required as a cofactor.

It carries out the reaction (2S,6S)-2,6-diaminopimelate + 2-oxoglutarate = (S)-2,3,4,5-tetrahydrodipicolinate + L-glutamate + H2O + H(+). Its pathway is amino-acid biosynthesis; L-lysine biosynthesis via DAP pathway; LL-2,6-diaminopimelate from (S)-tetrahydrodipicolinate (aminotransferase route): step 1/1. Its function is as follows. Involved in the synthesis of meso-diaminopimelate (m-DAP or DL-DAP), required for both lysine and peptidoglycan biosynthesis. Catalyzes the direct conversion of tetrahydrodipicolinate to LL-diaminopimelate. In Synechocystis sp. (strain ATCC 27184 / PCC 6803 / Kazusa), this protein is LL-diaminopimelate aminotransferase.